The primary structure comprises 226 residues: MAEGRGPVVALVPAAGQGVRLGENKPKAFVDLGGTTMLTRAVDGLLQSGAVDRVVVIVPEELVESTRSLLPGHVTVVAGGSERTGSVRAGLAVADDAEYVLVHDAARALTPPSLIARVVAELRCGRRAVIPVLPVADTIKTVDVLGAVTGTPERSELRAVQTPQGFTAELLRRAYAAADGIATDDAGLVERLGERVRSIVGEPTAFKITTPLDLVLARALVEEGAH.

This sequence belongs to the IspD/TarI cytidylyltransferase family. IspD subfamily.

The catalysed reaction is 2-C-methyl-D-erythritol 4-phosphate + CTP + H(+) = 4-CDP-2-C-methyl-D-erythritol + diphosphate. The protein operates within isoprenoid biosynthesis; isopentenyl diphosphate biosynthesis via DXP pathway; isopentenyl diphosphate from 1-deoxy-D-xylulose 5-phosphate: step 2/6. In terms of biological role, catalyzes the formation of 4-diphosphocytidyl-2-C-methyl-D-erythritol from CTP and 2-C-methyl-D-erythritol 4-phosphate (MEP). The polypeptide is 2-C-methyl-D-erythritol 4-phosphate cytidylyltransferase (Rhodococcus opacus (strain B4)).